The chain runs to 406 residues: CinA-like protein (406 aa).

The protein belongs to the CinA family.

The sequence is that of CinA-like protein from Deinococcus geothermalis (strain DSM 11300 / CIP 105573 / AG-3a).